Here is a 106-residue protein sequence, read N- to C-terminus: uncharacterized protein (106 aa).

A run of 2 helical transmembrane segments spans residues 25-45 and 62-82; these read VMNVVLNTLFSFVLAPYIHYI and ICFLAKFSFLLVFLFYLNFQG.

The protein localises to the membrane. This is an uncharacterized protein from Saccharomyces cerevisiae (strain ATCC 204508 / S288c) (Baker's yeast).